A 103-amino-acid polypeptide reads, in one-letter code: Putative membrane protein insertion efficiency factor (103 aa).

It belongs to the UPF0161 family.

It is found in the cell inner membrane. Could be involved in insertion of integral membrane proteins into the membrane. This is Putative membrane protein insertion efficiency factor from Chlamydia abortus (strain DSM 27085 / S26/3) (Chlamydophila abortus).